Consider the following 508-residue polypeptide: Octopamine receptor beta-1R (508 aa).

The Extracellular portion of the chain corresponds to 1–111 (MTLLQRLQAM…SHLALVFVKC (111 aa)). A helical transmembrane segment spans residues 112-132 (FIIGFIILAAILGNMLVIVSV). Topologically, residues 133-139 (MRHRKLR) are cytoplasmic. The helical transmembrane segment at 140-160 (IITNYFVVSLAVADMLVALCA) threads the bilayer. Residues 161–186 (MTFNASVMISGKWMFGSVMCDMWNSF) are Extracellular-facing. N164 carries N-linked (GlcNAc...) asparagine glycosylation. The chain crosses the membrane as a helical span at residues 187–209 (DVYFSTASIMHLCCISVDRYYAI). At 210 to 223 (VQPLDYPLIMTQRR) the chain is on the cytoplasmic side. A helical membrane pass occupies residues 224-244 (VFIMLLMVWLSPALLSFLPIC). At 245–270 (SGWYTTTENYKYLKSNPHICEFKVNK) the chain is on the extracellular side. A helical transmembrane segment spans residues 271 to 291 (AYAIVSSSMSFWIPGIVMLSM). At 292–351 (YYRIYQEADRQERLVYRSKVAALLLEKHLQISQIPKPRPSIQVEQSTISTMRRERKAART) the chain is on the cytoplasmic side. Residues 352 to 372 (LGIIMSAFLICWLPFFLWYIV) traverse the membrane as a helical segment. Topologically, residues 373–383 (SSLCDSCITPR) are extracellular. Residues 384 to 404 (LLVGILFWIGYFNSALNPIIY) form a helical membrane-spanning segment. Topologically, residues 405-508 (AYFNRDFRAA…MQQLHPLYTN (104 aa)) are cytoplasmic. Residues 440 to 464 (RDLEFGGPSRRGTNGAQRTGSGSAE) are disordered. A compositionally biased stretch (polar residues) spans 450 to 461 (RGTNGAQRTGSG).

The protein belongs to the G-protein coupled receptor 1 family. In terms of tissue distribution, in the adult, expressed in the superior protocerebrum and the optic lobe medulla of the central nervous system, nurse cells of egg chambers in the ovary at oogenic stages 1-10, and spermatogonia and spermatocytes in the testis. Expressed in embryonic and larval ventral nerve cord and brain lobe, and the larval imaginal disk and larval salivary gland. Also expressed in larval synaptic boutons and retinal cells in the optic disk.

The protein resides in the cell membrane. Functionally, autoreceptor for octopamine, which is a neurotransmitter, neurohormone, and neuromodulator in invertebrates. Negatively regulates synaptic growth by activating the inhibitory G protein Galphao and limiting cAMP production. Antagonizes the action of Octbeta2R which stimulates synaptic growth. The chain is Octopamine receptor beta-1R from Drosophila melanogaster (Fruit fly).